A 365-amino-acid polypeptide reads, in one-letter code: Holliday junction branch migration complex subunit RuvB (365 aa).

A large ATPase domain (RuvB-L) region spans residues 1–191 (MSPELGGGYD…FGFTAHMDFY (191 aa)). Residues Leu30, Arg31, Gly72, Lys75, Thr76, Ser77, 138–140 (EDF), Arg181, Tyr191, and Arg228 contribute to the ATP site. Mg(2+) is bound at residue Thr76. The segment at 192–262 (EPAELKQILM…IAHAALAVYD (71 aa)) is small ATPAse domain (RuvB-S). The tract at residues 265–365 (QLGLDRLDRS…QASLFDPEDP (101 aa)) is head domain (RuvB-H). DNA is bound by residues Arg320 and Arg325.

It belongs to the RuvB family. In terms of assembly, homohexamer. Forms an RuvA(8)-RuvB(12)-Holliday junction (HJ) complex. HJ DNA is sandwiched between 2 RuvA tetramers; dsDNA enters through RuvA and exits via RuvB. An RuvB hexamer assembles on each DNA strand where it exits the tetramer. Each RuvB hexamer is contacted by two RuvA subunits (via domain III) on 2 adjacent RuvB subunits; this complex drives branch migration. In the full resolvosome a probable DNA-RuvA(4)-RuvB(12)-RuvC(2) complex forms which resolves the HJ.

It is found in the cytoplasm. The catalysed reaction is ATP + H2O = ADP + phosphate + H(+). In terms of biological role, the RuvA-RuvB-RuvC complex processes Holliday junction (HJ) DNA during genetic recombination and DNA repair, while the RuvA-RuvB complex plays an important role in the rescue of blocked DNA replication forks via replication fork reversal (RFR). RuvA specifically binds to HJ cruciform DNA, conferring on it an open structure. The RuvB hexamer acts as an ATP-dependent pump, pulling dsDNA into and through the RuvAB complex. RuvB forms 2 homohexamers on either side of HJ DNA bound by 1 or 2 RuvA tetramers; 4 subunits per hexamer contact DNA at a time. Coordinated motions by a converter formed by DNA-disengaged RuvB subunits stimulates ATP hydrolysis and nucleotide exchange. Immobilization of the converter enables RuvB to convert the ATP-contained energy into a lever motion, pulling 2 nucleotides of DNA out of the RuvA tetramer per ATP hydrolyzed, thus driving DNA branch migration. The RuvB motors rotate together with the DNA substrate, which together with the progressing nucleotide cycle form the mechanistic basis for DNA recombination by continuous HJ branch migration. Branch migration allows RuvC to scan DNA until it finds its consensus sequence, where it cleaves and resolves cruciform DNA. This Rhodococcus opacus (strain B4) protein is Holliday junction branch migration complex subunit RuvB.